The following is a 737-amino-acid chain: Catalase-peroxidase (737 aa).

The segment at 1–29 is disordered; the sequence is MTDSPDATTGGCPVAHGDRLPHPTQGGAN. The segment at residues 101–227 is a cross-link (tryptophyl-tyrosyl-methioninium (Trp-Tyr) (with M-253)); sequence WHSAGTYRVS…LGATHMGLIY (127 aa). His-102 acts as the Proton acceptor in catalysis. Positions 227–253 form a cross-link, tryptophyl-tyrosyl-methioninium (Tyr-Met) (with W-101); that stretch reads YVNPEGPEGKPDPVAAARDIRETFGRM. His-268 provides a ligand contact to heme b.

This sequence belongs to the peroxidase family. Peroxidase/catalase subfamily. In terms of assembly, homodimer or homotetramer. It depends on heme b as a cofactor. Formation of the three residue Trp-Tyr-Met cross-link is important for the catalase, but not the peroxidase activity of the enzyme.

The enzyme catalyses H2O2 + AH2 = A + 2 H2O. The catalysed reaction is 2 H2O2 = O2 + 2 H2O. Its function is as follows. Bifunctional enzyme with both catalase and broad-spectrum peroxidase activity. This chain is Catalase-peroxidase, found in Saccharopolyspora erythraea (strain ATCC 11635 / DSM 40517 / JCM 4748 / NBRC 13426 / NCIMB 8594 / NRRL 2338).